Consider the following 7388-residue polypeptide: MSSSDEETLSERSCRSERSCRSERSYRSERSGSLSPCPPGDTLPWNLPLHEQKKRKSQDSVLDPAERAVVRVADERDRVQKKTFTKWVNKHLMKVRKHINDLYEDLRDGHNLISLLEVLSGIKLPREKGRMRFHRLQNVQIALDFLKQRQVKLVNIRNDDITDGNPKLTLGLIWTIILHFQISDIYISGESGDMSAKEKLLLWTQKVTAGYTGIKCTNFSSCWSDGKMFNALIHRYRPDLVDMERVQIQSNRENLEQAFEVAERLGVTRLLDAEDVDVPSPDEKSVITYVSSIYDAFPKVPEGGEGISATEVDSRWQEYQSRVDSLIPWIKQHTILMSDKTFPQNPVELKALYNQYIHFKETEILAKEREKGRIEELYKLLEVWIEFGRIKLPQGYHPNDVEEEWGKLIIEMLEREKSLRPAVERLELLLQIANKIQNGALNCEEKLTLAKNTLQADAAHLESGQPVQCESDVIMYIQECEGLIRQLQVDLQILRDENYYQLEELAFRVMRLQDELVTLRLECTNLYRKGHFTSLELVPPSTLTTTHLKAEPLTKATHSSSTSWFRKPMTRAELVAISSSEDEGNLRFVYELLSWVEEMQMKLERAEWGNDLPSVELQLETQQHIHTSVEELGSSVKEARLYEGKMSQNFHTSYAETLGKLETQYCKLKETSSFRMRHLQSLHKFVSRATAELIWLNEKEEEELAYDWSDNNSNISAKRNYFSELTMELEEKQDVFRSLQDTAELLSLENHPAKQTVEAYSAAVQSQLQWMKQLCLCVEQHVKENTAYFQFFSDARELESFLRNLQDSIKRKYSCDHNTSLSRLEDLLQDSMDEKEQLIQSKSSVASLVGRSKTIVQLKPRSPDHVLKNTISVKAVCDYRQIEITICKNDECVLEDNSQRTKWKVISPTGNEAMVPSVCFLIPPPNKDAIEMASRVEQSYQKVMALWHQLHVNTKSLISWNYLRKDLDLVQTWNLEKLRSSAPGECHQIMKNLQAHYEDFLQDSRDSVLFSVADRLRLEEEVEACKARFQHLMKSMENEDKEETVAKMYISELKNIRLRLEEYEQRVVKRIQSLASSRTDRDAWQDNALRIAEQEHTQEDLQQLRSDLDAVSMKCDSFLHQSPSSSSVPTLRSELNLLVEKMDHVYGLSTVYLNKLKTVDVIVRSIQDAELLVKGYEIKLSQEEVVLADLSALEAHWSTLRHWLSDVKDKNSVFSVLDEEIAKAKVVAEQMSRLTPERNLDLERYQEKGSQLQERWHRVIAQLEIRQSELESIQEVLGDYRACHGTLIKWIEETTAQQEMMKPGQAEDSRVLSEQLSQQTALFAEIERNQTKLDQCQKFSQQYSTIVKDYELQLMTYKAFVESQQKSPGKRRRMLSSSDAITQEFMDLRTRYTALVTLTTQHVKYISDALRRLEEEEKVVEEEKQEHVEKVKELLGWVSTLARNTQGKATSSETKESTDIEKAILEQQVLSEELTTKKEQVSEAIKTSQIFLAKHGHKLSEKEKKQISEQLNALNKAYHDLCDGSANQLQQLQSQLAHQTEQKECRAVAGVIDLGTVEIFPIFKAMQKGLLDQDTGLVLLESQVIMSGLIAPETGENLSLEEGIARNLINPQMYQQLRELQDALALISRLTESRGPLSVVEAIEKRIISETVGLKILEAHLATGGFSLSPSENCINLEEAFHQGLISAWLHSVLESYLRTSKNLIDPNTAEKIGLLDLMQRCIVHQESGFKLLPVKQLAGGMVSLKSGRKVSIFRAVQEGLIDRQVTVRLLEAQLFAGGIVDPRTGHRLTVEEAVRHNLIDQDMACAILIRQLQTGGIIDTVTGQRLTIDEAVSNDLVAAKIALVILESLWSFMGLLWPESGEILPITDALEQGIVSTELAHKILSNRQHIKALFLPATTEILSWKKAIESGILDRDLANNLKSICIPDVMPHMQLADSAEQNINPGAAVLPCSKSHPKATASQSENLLFQLMTHSYINVQNGQRLLLLDKELMETLTSRDEYQTSPPKVVEIGHQRQKTPEGLQESANVKISGTFSSGWTVRLPEFQFSSQNKEYPDREDCTTEKGKKTTVETEDSSVENPEQDLFVEQKERNPNIDALKVINKVKLEVQRQLIGTQREDQTAVSVRENASRGHLLTIPPAEAEGVPLVVDKDVFSVETPKKEHQPLRNTSFTCQNEQAHTLETEYIHDETGGSHIKPQSKKLQVQVKKTLGIKLELKSETDGNVHPLDKKEMLKKTFLAKDDHKESQEAQNIAGGSMMMSEKTDEEDSGREIFLSCSHPLELLEEATLNVLSAQLLDGGIFHEQTGQKLLLNEAISRGIVPSHTAVKLMEKLNMFQGFFDSQTCESLTTEEVINEGLMDEKLLHNVLMADKAISGVLDPRTQTLCSVKDAVTVGLLDKETATRILERQVVTGGIIDLKRGKKVSVTLASTLGLVDVADQPELINLEKASKGRDAEKTVRERLISLQMETTGLIDPDSKAPLTVVQSIDRGLLEREEAVRLLTKQVVDGGIIHHISGMRLSVDNAFRHGLIGEDLAEKLKRVENLNIHQIFNPETKENISLPKAIKLDLITSDLKREIQEVQAFTGNFVDLISGQRLTLAEAKKEGLLTNEAVLSPGMMHGIVDPENCRIVPYSELVKKCKIDIESGQRYLEVIPFSDIKDGVSDKVLTLSQAIQLGKVDFASTLKVLEAQANTGGIIDTATGKRLTLASALEEKLVDENMVRIIASHQVLNGGIVDIFSDQRVTLVEAIEKRLISPELANMIQIDSSEFSDHRAQIEKQEGIEVCALQNEFLGKDMLIACNQTAEMSCNKVEESERLFQVENQSAQEKVKVRVSDGEQAKKSREISLKEFGCKDQRKPRMSSDAKEFISIINPHNLKGKSLGQVSLTHPYSECDFKLKEVARNNMGNDTNEEQEKAVTKIEIISHMKQSTSCLDSEEIRENQGEVILEVQETYCETSGKLPSEQVLQQPMNARVKSKREKREVIVEESIRTCKPAFLSEEKLYQETAIRDEHDSHIKSQPREMTSSEKGKEADTEMGFSITFKIEESSSQVVPQGISVKHLDALTLFSSKQANEGKVNNLSLCLTLKPEENLSREIACGAQSEPFPCMTPRPEGLHYQESDGKAQVTGPSQISKTDKSFQGTTRQETNYQDSWVTSKTKETKHQISSSNECKEKSYQEVSFDPARGLKLEEITVSRPDSKEVRYLEFSDRKDLHHQGSKSDDKLCGTLKSEIATQELTGEKFLEMANPNVAGLEAGSIEDIVTQRGSRVLGSFLPEKLFKGVSQKENTGQQNAIISPTVLETSEEKTVSLTVCSAVKTEKTPQEKLRESPGSEQTPFMTAPEGKGNGGVNPEPFRATQNVFTRQLCLEHDEKLVSYLSLLRNIEMRTKQIQPLELNLAELQDLLCQAKVLERELKDLTTLVSQELECVNQIIISQPQEVPAQLLKALEKDAKNLQKSLSSVSDTWNSRLLHFQNAVEIEKTKVLNQHTQLEGRLQDLRAWVGNKNLILNSKGSNSEIDVDSLNLCLQQYEDLKQPMAERKAQLDALAFDIQFFISEHAQDLSPQQNRQMLRLLNELQRSFQDILEQTAAQVDALQGHLQQMEQEALVKTLQKQQNTCHQQLEDLCSWVGQAERALAGHQGRTTQQDLSALQKNQSDLKDLQDDIQNRATSFATVVKDIEGFMEENQTKLSPRELTALREKLHQAKEQYEALQEETRVAQKELEEAVTSALQQETEKSKAAKELAENKKKIDALLDWVTSVGSSGGQLLTNLPGMEQLSGASLEKGALDTTDGYMGVNQAPEKLDKQCEMMKARHQELLSQQQNFILATQSAQAFLDQHGHNLTPEEQQMLQQKLGELKEQYSTSLAQSEAELKQVQTLQDELQKFLQDHKEFESWLERSEKELENMHKGGSSPETLPSLLKRQGSFSEDVISHKGDLRFVTISGQKVLDMENSFKEGKEPSEIGNLVKDKLKDATERYTALHSKCTRLGSHLNMLLGQYHQFQNSADSLQAWMQACEANVEKLLSDTVASDPGVLQEQLATTKQLQEELAEHQVPVEKLQKVARDIMEIEGEPAPDHRHVQETTDSILSHFQSLSYSLAERSSLLQKAIAQSQSVQESLESLLQSIGEVEQNLEGKQVSSLSSGVIQEALATNMKLKQDIARQKSSLEATREMVTRFMETADSTTAAVLQGKLAEVSQRFEQLCLQQQEKESSLKKLLPQAEMFEHLSGKLQQFMENKSRMLASGNQPDQDITHFFQQIQELNLEMEDQQENLDTLEHLVTELSSCGFALDLCQHQDRVQNLRKDFTELQKTVKEREKDASSCQEQLDEFRKLVRTFQKWLKETEGSIPPTETSMSAKELEKQIEHLKSLLDDWASKGTLVEEINCKGTSLENLIMEITAPDSQGKTGSILPSVGSSVGSVNGYHTCKDLTEIQCDMSDVNLKYEKLGGVLHERQESLQAILNRMEEVHKEANSVLQWLESKEEVLKSMDAMSSPTKTETVKAQAESNKAFLAELEQNSPKIQKVKEALAGLLVTYPNSQEAENWKKIQEELNSRWERATEVTVARQRQLEESASHLACFQAAESQLRPWLMEKELMMGVLGPLSIDPNMLNAQKQQVQFMLKEFEARRQQHEQLNEAAQGILTGPGDVSLSTSQVQKELQSINQKWVELTDKLNSRSSQIDQAIVKSTQYQELLQDLSEKVRAVGQRLSVQSAISTQPEAVKQQLEETSEIRSDLEQLDHEVKEAQTLCDELSVLIGEQYLKDELKKRLETVALPLQGLEDLAADRINRLQAALASTQQFQQMFDELRTWLDDKQSQQAKNCPISAKLERLQSQLQENEEFQKSLNQHSGSYEVIVAEGESLLLSVPPGEEKRTLQNQLVELKNHWEELSKKTADRQSRLKDCMQKAQKYQWHVEDLVPWIEDCKAKMSELRVTLDPVQLESSLLRSKAMLNEVEKRRSLLEILNSAADILINSSEADEDGIRDEKAGINQNMDAVTEELQAKTGSLEEMTQRLREFQESFKNIEKKVEGAKHQLEIFDALGSQACSNKNLEKLRAQQEVLQALEPQVDYLRNFTQGLVEDAPDGSDASQLLHQAEVAQQEFLEVKQRVNSGCVMMENKLEGIGQFHCRVREMFSQLADLDDELDGMGAIGRDTDSLQSQIEDVRLFLNKIHVLKLDIEASEAECRHMLEEEGTLDLLGLKRELEALNKQCGKLTERGKARQEQLELTLGRVEDFYRKLKGLNDATTAAEEAEALQWVVGTEVEIINQQLADFKMFQKEQVDPLQMKLQQVNGLGQGLIQSAGKDCDVQGLEHDMEEINARWNTLNKKVAQRIAQLQEALLHCGKFQDALEPLLSWLADTEELIANQKPPSAEYKVVKAQIQEQKLLQRLLDDRKATVDMLQAEGGRIAQSAELADREKITGQLESLESRWTELLSKAAARQKQLEDILVLAKQFHETAEPISDFLSVTEKKLANSEPVGTQTAKIQQQIIRHKALNEEIVNRKKNVDQAIKNGQALLKQTTGEEVLLIQEKLDGIKTRYADITVTSSKALRTLEQARQLATKFQSTYEELTGWLREVEEELATSGGQSPTGEQIPQFQQRQKELKKEVMEHRLVLDTVNEVSRALLELVPWRAREGLDKLVSDANEQYKLVSDTIGQRVDEIDAAIQRSQQYEQAADAELAWVAETKRKLMALGPIRLEQDQTTAQLQVQKAFSIDIIRHKDSMDELFSHRSEIFGTCGEEQKTVLQEKTESLIQQYEAISLLNSERYARLERAQVLVNQFWETYEELSPWIEETRALIAQLPSPAIDHEQLRQQQEEMRQLRESIAEHKPHIDKLLKIGPQLKELNPEEGEMVEEKYQKAENMYAQIKEEVRQRALALDEAVSQSTQITEFHDKIEPMLETLENLSSRLRMPPLIPAEVDKIRECISDNKSATVELEKLQPSFEALKRRGEELIGRSQGADKDLAAKEIQDKLDQMVFFWEDIKARAEEREIKFLDVLELAEKFWYDMAALLTTIKDTQDIVHDLESPGIDPSIIKQQVEAAETIKEETDGLHEELEFIRILGADLIFACGETEKPEVRKSIDEMNNAWENLNKTWKERLEKLEDAMQAAVQYQDTLQAMFDWLDNTVIKLCTMPPVGTDLNTVKDQLNEMKEFKVEVYQQQIEMEKLNHQGELMLKKATDETDRDIIREPLTELKHLWENLGEKIAHRQHKLEGALLALGQFQHALEELMSWLTHTEELLDAQRPISGDPKVIEVELAKHHVLKNDVLAHQATVETVNKAGNELLESSAGDDASSLRSRLEAMNQCWESVLQKTEEREQQLQSTLQQAQGFHSEIEDFLLELTRMESQLSASKPTGGLPETAREQLDTHMELYSQLKAKEETYNQLLDKGRLMLLSRDDSGSGSKTEQSVALLEQKWHVVSSKMEERKSKLEEALNLATEFQNSLQEFINWLTLAEQSLNIASPPSLILNTVLSQIEEHKVFANEVNAHRDQIIELDQTGNQLKFLSQKQDVVLIKNLLVSVQSRWEKVVQRSIERGRSLDDARKRAKQFHEAWKKLIDWLEDAESHLDSELEISNDPDKIKLQLSKHKEFQKTLGGKQPVYDTTIRTGRALKEKTLLPEDSQKLDNFLGEVRDKWDTVCGKSVERQHKLEEALLFSGQFMDALQALVDWLYKVEPQLAEDQPVHGDLDLVMNLMDAHKVFQKELGKRTGTVQVLKRSGRELIENSRDDTTWVKGQLQELSTRWDTVCKLSVSKQSRLEQALKQAEVFRDTVHMLLEWLSEAEQTLRFRGALPDDTEALQSLIDTHKEFMKKVEEKRVDVNSAVAMGEVILAVCHPDCITTIKHWITIIRARFEEVLTWAKQHQQRLETALSELVANAELLEELLAWIQWAETTLIQRDQEPIPQNIDRVKALIAEHQTFMEEMTRKQPDVDRVTKTYKRKNIEPTHAPFIEKSRSGGRKSLSQPTPPPMPILSQSEAKNPRINQLSARWQQVWLLALERQRKLNDALDRLEELKEFANFDFDVWRKKYMRWMNHKKSRVMDFFRRIDKDQDGKITRQEFIDGILASKFPTTKLEMTAVADIFDRDGDGYIDYYEFVAALHPNKDAYRPTTDADKIEDEVTRQVAQCKCAKRFQVEQIGENKYRFGDSQQLRLVRILRSTVMVRVGGGWMALDEFLVKNDPCRARGRTNIELREKFILPEGASQGMTPFRSRGRRSKPSSRAASPTRSSSSASQSNHSCTSMPSSPATPASGTKVIPSSGSKLKRPTPTFHSSRTSLAGDTSNSSSPASTGAKTNRADPKKSASRPGSRAGSRAGSRASSRRGSDASDFDLLETQSACSDTSESSAAGGQGNSRRGLNKPSKIPTMSKKTTTASPRTPGPKR.

The interval methionine 1–leucine 47 is disordered. The tract at residues methionine 1–aspartate 295 is actin-binding. Serine 4 is subject to Phosphoserine. Residues leucine 9–arginine 30 are compositionally biased toward basic and acidic residues. Residues serine 35 and serine 57 each carry the phosphoserine modification. Calponin-homology (CH) domains are found at residues arginine 78 to glutamine 181 and methionine 194 to proline 298. LRR repeat units lie at residues glutamine 148–glycine 171 and leucine 240–arginine 264. At serine 280 the chain carries Phosphoserine. LRR repeat units lie at residues leucine 377–asparagine 399 and leucine 441–glycine 464. The residue at position 814 (serine 814) is a Phosphoserine. In terms of domain architecture, SH3 spans lysine 868–proline 925. The stretch at isoleucine 1050–serine 1073 is one LRR 5 repeat. Serine 1122 carries the post-translational modification Phosphoserine. 3 LRR repeats span residues valine 1128–asparagine 1154, leucine 1187–lysine 1210, and histidine 1257–alanine 1282. A phosphoserine mark is found at serine 1367 and serine 1376. 5 Plectin repeats span residues leucine 1577–glutamine 1621, leucine 1654–serine 1696, arginine 1769–leucine 1809, arginine 1811–glutamate 1848, and glycine 1855–serine 1886. Phosphoserine is present on residues serine 2006 and serine 2051. A disordered region spans residues serine 2051 to aspartate 2085. Over residues glutamate 2055–valine 2072 the composition is skewed to basic and acidic residues. Position 2077 is a phosphoserine (serine 2077). 6 Plectin repeats span residues leucine 2290–glutamate 2332, asparagine 2367–glutamine 2410, valine 2411–aspartate 2437, arginine 2501–valine 2543, glutamate 2581–glutamate 2612, and leucine 2686–glutamine 2730. 2 disordered regions span residues glutamate 3013 to alanine 3034 and serine 3104 to lysine 3174. A compositionally biased stretch (basic and acidic residues) spans glutamate 3115–glycine 3124. Residue serine 3122 is modified to Phosphoserine. Positions threonine 3129–serine 3158 are enriched in polar residues. LRR repeat units lie at residues leucine 3239 to aspartate 3262 and valine 3264 to glycine 3283. Residues glutamate 3321–proline 3332 show a composition bias toward basic and acidic residues. Residues glutamate 3321–glycine 3350 are disordered. Position 3331 is a phosphoserine (serine 3331). 2 LRR repeats span residues glutamine 3646–arginine 3669 and leucine 3696–alanine 3720. 2 Spectrin repeats span residues glutamate 3883 to lysine 3957 and glutamine 4000 to glutamine 4108. Position 3927 is a phosphoserine (serine 3927). Residues lysine 3936–glutamate 3958 form an LRR 13 repeat. LRR repeat units follow at residues leucine 4125–glutamate 4150 and isoleucine 4261–serine 4287. One copy of the Spectrin 3 repeat lies at arginine 4466–glutamate 4574. Phosphoserine is present on residues serine 4495, serine 4496, and serine 4521. LRR repeat units lie at residues lysine 4511 to leucine 4534, glycine 4601 to leucine 4624, and lysine 4769 to arginine 4792. Spectrin repeat units follow at residues threonine 4800–lysine 4904 and lysine 4909–glutamate 5012. Phosphoserine occurs at positions 4836 and 4962. LRR repeat units follow at residues asparagine 5051–asparagine 5076, asparagine 5172–glutamate 5194, and lysine 5281–serine 5304. Spectrin repeat units lie at residues glutamate 5236–glutamate 5341, lysine 5348–aspartate 5450, and alanine 5455–leucine 5557. Residue threonine 5435 is modified to Phosphothreonine. The tract at residues glutamate 5583–glutamine 5603 is disordered. Residues serine 5588 to glutamine 5603 are compositionally biased toward polar residues. LRR repeat units lie at residues methionine 5695–isoleucine 5719 and alanine 5804–glutamate 5828. Spectrin repeat units follow at residues asparagine 5783–glutamate 5885, leucine 6005–aspartate 6110, alanine 6115–glutamate 6219, leucine 6225–glutamine 6328, glutamine 6333–glutamate 6439, leucine 6443–aspartate 6547, arginine 6552–glutamate 6658, glutamine 6665–glutamine 6766, and alanine 6771–glutamate 6874. 2 positions are modified to phosphoserine: serine 5808 and serine 6032. Lysine 6210 bears the N6-acetyllysine mark. An LRR 24 repeat occupies arginine 6496–valine 6519. Residues proline 6951–glutamine 6981 form a disordered region. Position 6967 is a phosphoserine (serine 6967). 2 EF-hand domains span residues histidine 7041 to proline 7076 and threonine 7077 to alanine 7112. The Ca(2+) site is built by aspartate 7054, aspartate 7056, aspartate 7058, lysine 7060, glutamate 7065, aspartate 7090, aspartate 7092, aspartate 7094, tyrosine 7096, and glutamate 7101. Positions threonine 7117–arginine 7189 constitute a GAR domain. Residues threonine 7117–arginine 7388 are C-terminal tail. Residues proline 7205–arginine 7388 are disordered. Low complexity predominate over residues serine 7225–threonine 7259. Position 7254 is a phosphothreonine (threonine 7254). The segment covering threonine 7275 to lysine 7299 has biased composition (polar residues). A phosphoserine mark is found at serine 7279 and serine 7292. Low complexity predominate over residues serine 7310–alanine 7324. Residues glycine 7313–arginine 7328 are 4 X 4 AA tandem repeats of [GS]-S-R-[AR]. Phosphoserine is present on residues serine 7330 and serine 7333. The segment covering glutamate 7339–arginine 7361 has biased composition (polar residues).

Belongs to the plakin or cytolinker family. In terms of assembly, isoform 2: Interacts with MAPRE1, CLASP1, CLASP2, AXIN1 and LRP6. Isoform 2: Found in a complex composed of MACF1, APC, AXIN1, CTNNB1 and GSK3B. Isoform 2: Interacts with GOLGA4. Isoform 2: Interacts with CAMSAP3. Post-translationally, phosphorylated on serine residues in the C-terminal tail by GSK3B. Phosphorylation inhibits microtubule-binding and this plays a critical role in bulge stem cell migration and skin wound repair. Wnt-signaling can repress phosphorylation. As to expression, isoform 2: Ubiquitously expressed. Isoform 1: Expressed in cell lines NCI-H460, A-549 and HaCaT. Isoform 4: Expressed in heart, lung, pituitary and placenta, not found in brain, kidney, liver, pancreas or skeletal muscle.

The protein resides in the cytoplasm. It localises to the cytoskeleton. The protein localises to the golgi apparatus. Its subcellular location is the cell membrane. It is found in the cell projection. The protein resides in the ruffle membrane. Functionally, F-actin-binding protein which plays a role in cross-linking actin to other cytoskeletal proteins and also binds to microtubules. Plays an important role in ERBB2-dependent stabilization of microtubules at the cell cortex. Acts as a positive regulator of Wnt receptor signaling pathway and is involved in the translocation of AXIN1 and its associated complex (composed of APC, CTNNB1 and GSK3B) from the cytoplasm to the cell membrane. Has actin-regulated ATPase activity and is essential for controlling focal adhesions (FAs) assembly and dynamics. Interaction with CAMSAP3 at the minus ends of non-centrosomal microtubules tethers microtubules minus-ends to actin filaments, regulating focal adhesion size and cell migration. May play role in delivery of transport vesicles containing GPI-linked proteins from the trans-Golgi network through its interaction with GOLGA4. Plays a key role in wound healing and epidermal cell migration. Required for efficient upward migration of bulge cells in response to wounding and this function is primarily rooted in its ability to coordinate microtubule dynamics and polarize hair follicle stem cells. As a regulator of actin and microtubule arrangement and stabilization, it plays an essential role in neurite outgrowth, branching and spine formation during brain development. The protein is Microtubule-actin cross-linking factor 1, isoforms 1/2/3/4/5 of Homo sapiens (Human).